The sequence spans 97 residues: Citrate lyase acyl carrier protein (97 aa).

At Ser14 the chain carries O-(phosphoribosyl dephospho-coenzyme A)serine.

Belongs to the CitD family. Oligomer with a subunit composition of (alpha,beta,gamma)6.

The protein localises to the cytoplasm. Covalent carrier of the coenzyme of citrate lyase. The chain is Citrate lyase acyl carrier protein from Leuconostoc citreum (strain KM20).